The primary structure comprises 352 residues: N-acetyl-gamma-glutamyl-phosphate reductase (352 aa).

C155 is a catalytic residue.

The protein belongs to the NAGSA dehydrogenase family. Type 1 subfamily.

The protein localises to the cytoplasm. The enzyme catalyses N-acetyl-L-glutamate 5-semialdehyde + phosphate + NADP(+) = N-acetyl-L-glutamyl 5-phosphate + NADPH + H(+). It functions in the pathway amino-acid biosynthesis; L-arginine biosynthesis; N(2)-acetyl-L-ornithine from L-glutamate: step 3/4. In terms of biological role, catalyzes the NADPH-dependent reduction of N-acetyl-5-glutamyl phosphate to yield N-acetyl-L-glutamate 5-semialdehyde. This chain is N-acetyl-gamma-glutamyl-phosphate reductase, found in Acaryochloris marina (strain MBIC 11017).